Here is a 337-residue protein sequence, read N- to C-terminus: uncharacterized protein (337 aa).

2 helical membrane-spanning segments follow: residues 241 to 261 (FTLL…GAFI) and 273 to 293 (ASLI…IGII).

This sequence belongs to the glycosyltransferase 2 family.

The protein localises to the cell membrane. This is an uncharacterized protein from Bacillus subtilis (strain 168).